The following is a 629-amino-acid chain: Microtubule-associated protein 70-3 (629 aa).

The tract at residues 1-54 (MEEGGYAFEVNNGRPTASEFGTTARISSPSLTMSSSFREGGGGGGSKGLTRRRS) is disordered. Residues 13 to 33 (GRPTASEFGTTARISSPSLTM) are compositionally biased toward polar residues. Positions 75–375 (VKVELNRLEN…ADRAAKSEAQ (301 aa)) form a coiled coil. The required for targeting to microtubules stretch occupies residues 257-493 (ILDKLHRQKV…FPLNQSSEGT (237 aa)). Disordered stretches follow at residues 391–421 (LRGPSSSGNRSTPEGRSMSNGPSRRQSLGGA), 458–519 (GTSR…DSVP), and 578–629 (AMEK…RSTQ). The span at 393 to 416 (GPSSSGNRSTPEGRSMSNGPSRRQ) shows a compositional bias: polar residues. Positions 544–592 (LRDKDEAIEMLAKKVETLTKAMEVEAKKMRREVAAMEKEVSAMRVDNKG) form a coiled coil. Residues 578-596 (AMEKEVSAMRVDNKGSDSR) are compositionally biased toward basic and acidic residues. The span at 603-613 (NSKGASTTAQL) shows a compositional bias: polar residues.

The protein belongs to the MAP70 family.

It localises to the cytoplasm. The protein localises to the cytoskeleton. Its function is as follows. Plant-specific protein that interact with microtubules. This Arabidopsis thaliana (Mouse-ear cress) protein is Microtubule-associated protein 70-3 (MAP70.3).